A 225-amino-acid polypeptide reads, in one-letter code: Small ribosomal subunit protein uS2 (225 aa).

Belongs to the universal ribosomal protein uS2 family.

This Metallosphaera sedula (strain ATCC 51363 / DSM 5348 / JCM 9185 / NBRC 15509 / TH2) protein is Small ribosomal subunit protein uS2.